Consider the following 476-residue polypeptide: tRNA(Ile)-lysidine synthase (476 aa).

26–31 (SGGSDS) serves as a coordination point for ATP.

This sequence belongs to the tRNA(Ile)-lysidine synthase family.

It is found in the cytoplasm. The enzyme catalyses cytidine(34) in tRNA(Ile2) + L-lysine + ATP = lysidine(34) in tRNA(Ile2) + AMP + diphosphate + H(+). In terms of biological role, ligates lysine onto the cytidine present at position 34 of the AUA codon-specific tRNA(Ile) that contains the anticodon CAU, in an ATP-dependent manner. Cytidine is converted to lysidine, thus changing the amino acid specificity of the tRNA from methionine to isoleucine. The protein is tRNA(Ile)-lysidine synthase of Bartonella quintana (strain Toulouse) (Rochalimaea quintana).